A 663-amino-acid polypeptide reads, in one-letter code: Leishmanolysin-like peptidase (663 aa).

H246 provides a ligand contact to Zn(2+). E247 is a catalytic residue. Zn(2+) contacts are provided by H250 and H353.

Belongs to the peptidase M8 family. It depends on Zn(2+) as a cofactor.

The protein resides in the cytoplasm. Its function is as follows. Metalloprotease. The polypeptide is Leishmanolysin-like peptidase (Caenorhabditis briggsae).